Reading from the N-terminus, the 574-residue chain is MATTELPKFELLSLADNTSGWGPLTTSSSSVEPVPFQQFNKADRIGRVADWIGVDRFFRRGNERYNERVYGSAANAGSQFDYIHGMDEHNFQLVDTSKPMARNPQRNFRVRQMHLRKMMQKEVEKREMVNQTTNLRMKRSIAKEQQRAFKMWQRRGGNARQGQRGQGGRFGGDRPKERLPSVQVRPEWGVLEEMNLSAFSKLALPNIPGGEDIGDHQYGSLQYYDKTVDRVSVKNSVPLQRCAGVYYNVTTTEDPVIQELAQGGVGNVFGTDIILATLMTAPRSVYSWDIVAYRIGDKLFFDKRNTKDILNPVETLTVSETSAEPPSFDGNGLNNARDLATEAFYINQNFRRQVVKRNEPGFTFKNVRVPFEDEETGDATGTAYKYRKWNLGNGVDGKPVELVCRTELDGVIHGLGNETQTLTIKAFNEWDSSQAGGVDWRTKLDVQKGAVMATEIKNNSAKVAKWTLQALLAGSDTMKLGYVSRNNARSTQNHSILNTQYVKPTEFASNIALNMDNCWGILRCVIDSCMKQKPGKYLLMKDPQSPVIRLYSLPEGTFDSERESSEEENSDDDQ.

The disordered stretch occupies residues 153 to 178 (QRRGGNARQGQRGQGGRFGGDRPKER). Low complexity predominate over residues 154–163 (RRGGNARQGQ). The segment at 312–326 (PVETLTVSETSAEPP) is RNA gate. The segment at 555–574 (EGTFDSERESSEEENSDDDQ) is disordered. Positions 564 to 574 (SSEEENSDDDQ) are enriched in acidic residues.

It belongs to the eIF-3 subunit D family. Component of the eukaryotic translation initiation factor 3 (eIF-3) complex.

The protein resides in the cytoplasm. MRNA cap-binding component of the eukaryotic translation initiation factor 3 (eIF-3) complex, which is involved in protein synthesis of a specialized repertoire of mRNAs and, together with other initiation factors, stimulates binding of mRNA and methionyl-tRNAi to the 40S ribosome. The eIF-3 complex specifically targets and initiates translation of a subset of mRNAs involved in cell proliferation. In the eIF-3 complex, eif3d specifically recognizes and binds the 7-methylguanosine cap of a subset of mRNAs. In Caenorhabditis briggsae, this protein is Eukaryotic translation initiation factor 3 subunit D.